Here is a 90-residue protein sequence, read N- to C-terminus: MKTAIFTVVLALAVFAVLSFGWEANEKALSEEFTELIHEKEAASETEARECRYFWGECHDHMPCCDWLVCRYKWLITYNICVWNRTFPEK.

A signal peptide spans 1–19; the sequence is MKTAIFTVVLALAVFAVLS. Residues 20–50 constitute a propeptide that is removed on maturation; that stretch reads FGWEANEKALSEEFTELIHEKEAASETEARE. Intrachain disulfides connect Cys51/Cys65, Cys58/Cys70, and Cys64/Cys81.

It belongs to the neurotoxin 10 (Hwtx-1) family. 13 (Hntx-13) subfamily. Expressed by the venom gland.

It localises to the secreted. Functionally, ion channel inhibitor. The protein is U7-theraphotoxin-Hhn1j of Cyriopagopus hainanus (Chinese bird spider).